We begin with the raw amino-acid sequence, 536 residues long: Vacuolar segregation protein pep7 (536 aa).

A disordered region spans residues 1 to 31 (MQNGKRRIGVRISSNLSNHSGTNLSTSAQSD). Positions 12-31 (ISSNLSNHSGTNLSTSAQSD) are enriched in polar residues. The C2H2-type zinc finger occupies 39–62 (TECPICGLELPNLSALNDHLDVTH). The FYVE-type 1; degenerate zinc-finger motif lies at 136–201 (PDMVCHDPMC…VCRECYEGRP (66 aa)). Zn(2+)-binding residues include Cys158, Cys161, Cys193, Cys196, Cys281, Cys284, Cys297, Cys300, Cys305, Cys308, Cys324, and Cys327. The FYVE-type 2 zinc-finger motif lies at 275-332 (DSVVQICPECNNSFTLTRRRRHCRLCGRVICRFCVLEISLPQHPQPLLICMSCNQNYF).

Functionally, required for vacuole segregation and vacuole protein sorting. Possibly part of a complex which tethers the vacuole membrane to microtubules, either directly or via kinesin or dynein-like motor proteins. Probably functions in several interorganelle traffic pathways. The sequence is that of Vacuolar segregation protein pep7 (pep7) from Schizosaccharomyces pombe (strain 972 / ATCC 24843) (Fission yeast).